A 164-amino-acid chain; its full sequence is Large ribosomal subunit protein uL15 (164 aa).

Disordered regions lie at residues 1 to 49 (MTKL…SIAG) and 143 to 164 (EKAG…SAEA). A compositionally biased stretch (gly residues) spans 22 to 36 (RGPGSGKGKTAGRGV).

It belongs to the universal ribosomal protein uL15 family. Part of the 50S ribosomal subunit.

Functionally, binds to the 23S rRNA. The protein is Large ribosomal subunit protein uL15 of Phenylobacterium zucineum (strain HLK1).